Reading from the N-terminus, the 234-residue chain is LexA repressor (234 aa).

Positions 26–46 form a DNA-binding region, H-T-H motif; sequence FDEMKDALDLRSKSGIHRLIT. The segment at 80-107 is disordered; the sequence is RGFTPSVIEGNLGKVRPPSPQHAEDDSD. Catalysis depends on for autocatalytic cleavage activity residues serine 155 and lysine 193.

Belongs to the peptidase S24 family. In terms of assembly, homodimer.

The catalysed reaction is Hydrolysis of Ala-|-Gly bond in repressor LexA.. Functionally, represses a number of genes involved in the response to DNA damage (SOS response), including recA and lexA. In the presence of single-stranded DNA, RecA interacts with LexA causing an autocatalytic cleavage which disrupts the DNA-binding part of LexA, leading to derepression of the SOS regulon and eventually DNA repair. This is LexA repressor from Rhodopseudomonas palustris (strain HaA2).